Here is a 301-residue protein sequence, read N- to C-terminus: Amine sulfotransferase (301 aa).

46–51 (KSGTVW) contacts 3'-phosphoadenylyl sulfate. H101 (proton acceptor) is an active-site residue. 3'-phosphoadenylyl sulfate contacts are provided by residues R123, S131, Y186, 220–225 (ATFENM), and 252–254 (RKG).

It belongs to the sulfotransferase 1 family. Expressed in male liver.

The protein localises to the cytoplasm. The enzyme catalyses a primary amine + 3'-phosphoadenylyl sulfate = a sulfamate + adenosine 3',5'-bisphosphate + 2 H(+). In terms of biological role, sulfotransferase that utilizes 3'-phospho-5'-adenylyl sulfate (PAPS) as sulfonate donor to catalyze the N-sulfonation of amines (PTHP, aniline, 4-chloroaniline, 2-naphthylamine). The polypeptide is Amine sulfotransferase (SULT3A1) (Oryctolagus cuniculus (Rabbit)).